The following is a 191-amino-acid chain: Cytochrome c biogenesis ATP-binding export protein CcmA (191 aa).

The 184-residue stretch at 6 to 189 (LVATDIACRR…RVRTLAIRNF (184 aa)) folds into the ABC transporter domain. 38–45 (GANGIGKS) is an ATP binding site.

The protein belongs to the ABC transporter superfamily. CcmA exporter (TC 3.A.1.107) family. In terms of assembly, the complex is composed of two ATP-binding proteins (CcmA) and two transmembrane proteins (CcmB).

Its subcellular location is the cell inner membrane. The enzyme catalyses heme b(in) + ATP + H2O = heme b(out) + ADP + phosphate + H(+). Functionally, part of the ABC transporter complex CcmAB involved in the biogenesis of c-type cytochromes; once thought to export heme, this seems not to be the case, but its exact role is uncertain. Responsible for energy coupling to the transport system. The polypeptide is Cytochrome c biogenesis ATP-binding export protein CcmA (Novosphingobium aromaticivorans (strain ATCC 700278 / DSM 12444 / CCUG 56034 / CIP 105152 / NBRC 16084 / F199)).